The primary structure comprises 134 residues: Profilin (134 aa).

It belongs to the profilin family. As to quaternary structure, interacts with host Tpm1. Interacts with protein A25.

Its subcellular location is the host cytoplasm. In terms of biological role, participates in either intracellular transport of viral proteins or intercellular spread of the virus. Cellular profilins modulate actin filament dynamics (polymerization and depolymerization) via direct binding to actin through an actin-binding domain as well as by modulation of other actin-binding proteins. In contrast to cellular homologs, the poxvirus profilins seem to bind actin only weakly. The sequence is that of Profilin from Ectromelia virus (strain Moscow) (ECTV).